We begin with the raw amino-acid sequence, 59 residues long: MAQIKITLTKSPIGRKPEQRKTVVALGLGKLNSSVVKEDNAAIRGMVNAISHLVTVEEA.

It belongs to the universal ribosomal protein uL30 family. Part of the 50S ribosomal subunit.

The polypeptide is Large ribosomal subunit protein uL30 (Streptococcus agalactiae serotype Ia (strain ATCC 27591 / A909 / CDC SS700)).